Consider the following 262-residue polypeptide: Acyl-[acyl-carrier-protein]--UDP-N-acetylglucosamine O-acyltransferase (262 aa).

The protein belongs to the transferase hexapeptide repeat family. LpxA subfamily. In terms of assembly, homotrimer.

The protein localises to the cytoplasm. It catalyses the reaction a (3R)-hydroxyacyl-[ACP] + UDP-N-acetyl-alpha-D-glucosamine = a UDP-3-O-[(3R)-3-hydroxyacyl]-N-acetyl-alpha-D-glucosamine + holo-[ACP]. Its pathway is glycolipid biosynthesis; lipid IV(A) biosynthesis; lipid IV(A) from (3R)-3-hydroxytetradecanoyl-[acyl-carrier-protein] and UDP-N-acetyl-alpha-D-glucosamine: step 1/6. Involved in the biosynthesis of lipid A, a phosphorylated glycolipid that anchors the lipopolysaccharide to the outer membrane of the cell. In Burkholderia mallei (strain NCTC 10247), this protein is Acyl-[acyl-carrier-protein]--UDP-N-acetylglucosamine O-acyltransferase.